The sequence spans 325 residues: tRNA dimethylallyltransferase (325 aa).

Residue 16-23 coordinates ATP; that stretch reads GPTASGKT. Position 18 to 23 (18 to 23) interacts with substrate; sequence TASGKT. Interaction with substrate tRNA stretches follow at residues 41–44, 165–169, 253–258, and 286–293; these read DSAL, QRIQR, RCVGYR, and KRQITWLR.

It belongs to the IPP transferase family. Monomer. It depends on Mg(2+) as a cofactor.

It carries out the reaction adenosine(37) in tRNA + dimethylallyl diphosphate = N(6)-dimethylallyladenosine(37) in tRNA + diphosphate. Catalyzes the transfer of a dimethylallyl group onto the adenine at position 37 in tRNAs that read codons beginning with uridine, leading to the formation of N6-(dimethylallyl)adenosine (i(6)A). The polypeptide is tRNA dimethylallyltransferase (Ralstonia pickettii (strain 12J)).